The chain runs to 357 residues: BLOC-1-related complex subunit 6 (357 aa).

The disordered stretch occupies residues 20-196; it reads HQALVFGGGP…SGAGGGRRAT (177 aa). Over residues 90-99 the composition is skewed to low complexity; sequence GAGSRRGAPG. A compositionally biased stretch (acidic residues) spans 138-149; the sequence is EQQEEEDNDEEA. Residues 150-162 are compositionally biased toward low complexity; that stretch reads AAGSRAGRSFSSR. Ser168 bears the Phosphoserine mark. Thr196 bears the Phosphothreonine mark. Ser199 carries the phosphoserine modification. A disordered region spans residues 227-256; sequence LSGAPPPPPSAPARPCPAPAPTPTPAIPPI. A compositionally biased stretch (pro residues) spans 230-256; that stretch reads APPPPPSAPARPCPAPAPTPTPAIPPI.

This sequence belongs to the BORCS6 family. In terms of assembly, component of the BLOC-one-related complex (BORC) which is composed of BLOC1S1, BLOC1S2, BORCS5, BORCS6, BORCS7, BORCS8, KXD1 and SNAPIN.

The protein resides in the lysosome membrane. As part of the BORC complex may play a role in lysosomes movement and localization at the cell periphery. Associated with the cytosolic face of lysosomes, the BORC complex may recruit ARL8B and couple lysosomes to microtubule plus-end-directed kinesin motor. This Homo sapiens (Human) protein is BLOC-1-related complex subunit 6.